The following is a 310-amino-acid chain: HTH-type transcriptional regulator PunR (310 aa).

The 58-residue stretch at 2-59 (WSEYSLEVVDAVARNGSFSAAAQELHRVPSAVSYTVRQLEEWLAVPLFERRHRDVELT) folds into the HTH lysR-type domain. A DNA-binding region (H-T-H motif) is located at residues 19–38 (FSAAAQELHRVPSAVSYTVR).

Belongs to the LysR transcriptional regulatory family.

Its subcellular location is the cytoplasm. Transcriptional regulator that activates the expression of punC, which encodes a purine nucleoside transporter. This chain is HTH-type transcriptional regulator PunR, found in Escherichia coli O157:H7.